A 114-amino-acid chain; its full sequence is UPF0102 protein jhp_0762 (114 aa).

This sequence belongs to the UPF0102 family.

The protein is UPF0102 protein jhp_0762 of Helicobacter pylori (strain J99 / ATCC 700824) (Campylobacter pylori J99).